The following is a 256-amino-acid chain: Imidazole glycerol phosphate synthase subunit HisF (256 aa).

Active-site residues include Asp12 and Asp131.

The protein belongs to the HisA/HisF family. As to quaternary structure, heterodimer of HisH and HisF.

The protein resides in the cytoplasm. It carries out the reaction 5-[(5-phospho-1-deoxy-D-ribulos-1-ylimino)methylamino]-1-(5-phospho-beta-D-ribosyl)imidazole-4-carboxamide + L-glutamine = D-erythro-1-(imidazol-4-yl)glycerol 3-phosphate + 5-amino-1-(5-phospho-beta-D-ribosyl)imidazole-4-carboxamide + L-glutamate + H(+). It participates in amino-acid biosynthesis; L-histidine biosynthesis; L-histidine from 5-phospho-alpha-D-ribose 1-diphosphate: step 5/9. Its function is as follows. IGPS catalyzes the conversion of PRFAR and glutamine to IGP, AICAR and glutamate. The HisF subunit catalyzes the cyclization activity that produces IGP and AICAR from PRFAR using the ammonia provided by the HisH subunit. In Pseudomonas fluorescens (strain Pf0-1), this protein is Imidazole glycerol phosphate synthase subunit HisF.